Consider the following 195-residue polypeptide: Putative NADH dehydrogenase/NAD(P)H nitroreductase RSc1004 (195 aa).

The protein belongs to the nitroreductase family. HadB/RutE subfamily. FMN serves as cofactor.

The protein is Putative NADH dehydrogenase/NAD(P)H nitroreductase RSc1004 of Ralstonia nicotianae (strain ATCC BAA-1114 / GMI1000) (Ralstonia solanacearum).